A 517-amino-acid polypeptide reads, in one-letter code: Ribonuclease Y (517 aa).

Residues 1-21 (MIESLIALIAAIVGLGIGYLV) form a helical membrane-spanning segment. The KH domain maps to 207–273 (LINVINIKND…TKVIELLVED (67 aa)). The HD domain occupies 333 to 426 (ALAHSLEVAH…VCAADTLSAA (94 aa)).

The protein belongs to the RNase Y family.

It is found in the cell membrane. Its function is as follows. Endoribonuclease that initiates mRNA decay. The sequence is that of Ribonuclease Y from Campylobacter jejuni subsp. jejuni serotype O:23/36 (strain 81-176).